A 340-amino-acid polypeptide reads, in one-letter code: MSAPIIAIDAMGGDFGPRNIVQASLACLTATPSLHLALVGQASLIEELIASHAAVDRSRLRVVNATESIAMDERPSQALRGKSDSSMRVALELVSSGQAQACVSAGNTGALMALSRYVLKTLPGIDRPAMIAAIPTRTGHCQLLDLGANVDCSAEALYQFAVMGSVLAETLGVTKPRVALLNVGTEDIKGNQQVKLAAGLLQAAAGLNYIGYVEGDGVYRGEADVVVCDGFVGNVLLKSSEGLATMIAARIDALFNRNLLSRAVGALALPLLRRLQIDLAPARHNGASLLGLQGVVVKSHGSASVSGFQSAIQRAIVESREDLPQRLKGRLEVMFADGRT.

The protein belongs to the PlsX family. In terms of assembly, homodimer. Probably interacts with PlsY.

It localises to the cytoplasm. The catalysed reaction is a fatty acyl-[ACP] + phosphate = an acyl phosphate + holo-[ACP]. Its pathway is lipid metabolism; phospholipid metabolism. Catalyzes the reversible formation of acyl-phosphate (acyl-PO(4)) from acyl-[acyl-carrier-protein] (acyl-ACP). This enzyme utilizes acyl-ACP as fatty acyl donor, but not acyl-CoA. This Pseudomonas syringae pv. tomato (strain ATCC BAA-871 / DC3000) protein is Phosphate acyltransferase.